Consider the following 445-residue polypeptide: MGGGGQLGESGENGCKSAAGVYTWEEVQHHSNRNDQWLVIDRKVYNVTQWAKRHPGGFRVLNHYAGEDATEAFTAFHPDIKFVQKYMKPLLVGELAATEPSQDQDKNAALIQDFHTLRQQAESEGLFQARPLFFLLHLGHILLLEALALLMVWHWGTGWLQTLLCAVMLATAQSQAGWLQHDFGHLSVFKKSRWNHLVHKFVIGHLKGASANWWNHRHFQHHAKPNIFKKDPDINMVDLFVLGETQPVEYGIKKIKNMPYNHQHKYFFLVAPPLLIPVFYNYNIMMTMITRRDYVDLSWAMTFYIRYMLCYVPVYGLFGSLALMMFARFLESHWFVWVTQMSHLPMDIDNDKRRDWLSMQLQATCNIEKSFFNDWFSGHLNFQIEHHLFPRMPRHNYHLVAPQVQTLCEKHGIPYEVKTLWKGMVDVVRALKKSGDLWLDAYLHK.

The 78-residue stretch at 19–96 (AGVYTWEEVQ…MKPLLVGELA (78 aa)) folds into the Cytochrome b5 heme-binding domain. Helical transmembrane passes span 132 to 152 (LFFL…LLMV), 153 to 173 (WHWG…ATAQ), 266 to 286 (YFFL…NIMM), and 307 to 327 (YMLC…MMFA).

The protein belongs to the fatty acid desaturase type 1 family.

The protein localises to the membrane. The enzyme catalyses (8Z,11Z,14Z,17Z)-eicosatetraenoyl-CoA + 2 Fe(II)-[cytochrome b5] + O2 + 2 H(+) = (5Z,8Z,11Z,14Z,17Z)-eicosapentaenoyl-CoA + 2 Fe(III)-[cytochrome b5] + 2 H2O. It catalyses the reaction (7Z,10Z,13Z,16Z)-docosatetraenoyl-CoA + 2 Fe(II)-[cytochrome b5] + O2 + 2 H(+) = (4Z,7Z,10Z,13Z,16Z)-docosapentaenoyl-CoA + 2 Fe(III)-[cytochrome b5] + 2 H2O. The catalysed reaction is (7Z,10Z,13Z,16Z,19Z)-docosapentaenoyl-CoA + 2 Fe(II)-[cytochrome b5] + O2 + 2 H(+) = (4Z,7Z,10Z,13Z,16Z,19Z)-docosahexaenoyl-CoA + 2 Fe(III)-[cytochrome b5] + 2 H2O. It participates in lipid metabolism; polyunsaturated fatty acid biosynthesis. Fatty acid desaturase with bifunctional delta-4 and delta-5 activities. Component of a lipid metabolic pathway that catalyzes the biosynthesis of polyunsaturated fatty acids (PUFA) with preference toward n-3 substrates and Delta(4)function. This Siganus canaliculatus (White-spotted spinefoot) protein is Acyl-CoA Delta-4 desaturase.